A 280-amino-acid polypeptide reads, in one-letter code: Eukaryotic translation initiation factor 3 subunit F-1 (280 aa).

The MPN domain occupies 8–138 (VRVHPVVLFQ…LRSYVCIQLG (131 aa)).

This sequence belongs to the eIF-3 subunit F family. Component of the eukaryotic translation initiation factor 3 (eIF-3) complex. The eIF-3 complex interacts with pix.

The protein localises to the cytoplasm. Component of the eukaryotic translation initiation factor 3 (eIF-3) complex, which is involved in protein synthesis of a specialized repertoire of mRNAs and, together with other initiation factors, stimulates binding of mRNA and methionyl-tRNAi to the 40S ribosome. The eIF-3 complex specifically targets and initiates translation of a subset of mRNAs involved in cell proliferation. This Drosophila persimilis (Fruit fly) protein is Eukaryotic translation initiation factor 3 subunit F-1.